The following is a 167-amino-acid chain: MVKILVLALVFSLAHAQDFAELQGKWYTIVIAADNLEKIEEGGPLRFYFRHIDCYKNCSEMEITFYVITNNQCSKTTVIGYLKGNGTYQTQFEGNNIFQPLYITSDKIFFTNKNMDRAGQETNMIVVAGKGNALTPEENEILVQFAHEKKIPVENILNILATDTCPE.

Residues 1 to 16 form the signal peptide; it reads MVKILVLALVFSLAHA. Gln-17 is subject to Pyrrolidone carboxylic acid. 2 disulfides stabilise this stretch: Cys-54–Cys-58 and Cys-73–Cys-165. Residues Asn-57 and Asn-85 are each glycosylated (N-linked (GlcNAc...) asparagine).

Belongs to the calycin superfamily. Lipocalin family. Expressed in the vagina, uterus, and Bartholin's glands of female hamsters. Secreted in vaginal discharge.

The protein localises to the secreted. In terms of biological role, acts as an aphrodisiac pheromone, reliably eliciting copulatory behavior from male hamster. The polypeptide is Aphrodisin (Mesocricetus auratus (Golden hamster)).